Reading from the N-terminus, the 395-residue chain is THP3 homolog C2A9.11c (395 aa).

The segment at Leu91–Pro127 is disordered. In terms of domain architecture, PCI spans Asp218–Lys384.

It belongs to the THP3 family.

It is found in the cytoplasm. The protein localises to the nucleus. Functionally, required for transcription elongation. May also be involved in pre-mRNA splicing. This Schizosaccharomyces pombe (strain 972 / ATCC 24843) (Fission yeast) protein is THP3 homolog C2A9.11c.